The primary structure comprises 235 residues: Aspartate/glutamate leucyltransferase (235 aa).

It belongs to the R-transferase family. Bpt subfamily.

The protein localises to the cytoplasm. It carries out the reaction N-terminal L-glutamyl-[protein] + L-leucyl-tRNA(Leu) = N-terminal L-leucyl-L-glutamyl-[protein] + tRNA(Leu) + H(+). The catalysed reaction is N-terminal L-aspartyl-[protein] + L-leucyl-tRNA(Leu) = N-terminal L-leucyl-L-aspartyl-[protein] + tRNA(Leu) + H(+). Functionally, functions in the N-end rule pathway of protein degradation where it conjugates Leu from its aminoacyl-tRNA to the N-termini of proteins containing an N-terminal aspartate or glutamate. This chain is Aspartate/glutamate leucyltransferase, found in Pseudomonas fluorescens (strain SBW25).